A 221-amino-acid polypeptide reads, in one-letter code: Sugar transporter SWEET1 (221 aa).

7 consecutive transmembrane segments (helical) span residues 3-23 (AGGV…LGMF), 43-63 (QFLP…YGVL), 68-88 (TLII…LAYL), 102-122 (ATLL…VPDL), 129-149 (LGLF…ADLA), 160-180 (LSFS…IYGF), and 186-206 (YITV…GLFC). One can recognise a MtN3/slv 1 domain in the interval 10 to 94 (FLSSACVLFT…LAYLHYSPQK (85 aa)). Positions 127-212 (QQLGLFCSVF…GLFCKYPPEQ (86 aa)) constitute a MtN3/slv 2 domain. A mediates interaction with TRPV2 region spans residues 149–221 (AKIVQTKSTQ…QDRKYRLLQT (73 aa)).

The protein belongs to the SWEET sugar transporter family. As to quaternary structure, interacts with TRPV2; the interaction probably occurs intracellularly and depends on TRPV2 N-glycosylation. Expressed at high levels in lung, placenta, spleen and thymus, at intermediate levels in brain, heart, kidney and testis, and at low levels in bone marrow, liver and lymph node. Within the thymus expression is highest in non-lymphoid cells.

It localises to the golgi apparatus membrane. It is found in the cell membrane. Its function is as follows. Mediates sugar transport across membranes. May regulate the expression of RAG1 a gene involved in V(D)J recombination. In Mus musculus (Mouse), this protein is Sugar transporter SWEET1 (Slc50a1).